A 286-amino-acid polypeptide reads, in one-letter code: Beta-lactamase SHV-34 (286 aa).

A signal peptide spans 1 to 21; it reads MRYFRLCIISLLATLPLAVHA. S66 serves as the catalytic Acyl-ester intermediate. Cysteines 73 and 119 form a disulfide. Catalysis depends on E164, which acts as the Proton acceptor. 230 to 232 contacts substrate; it reads KTG.

The protein belongs to the class-A beta-lactamase family.

The enzyme catalyses a beta-lactam + H2O = a substituted beta-amino acid. In terms of biological role, hydrolyzes ceftazidime and cefotaxime. In Escherichia coli, this protein is Beta-lactamase SHV-34 (bla).